The primary structure comprises 366 residues: Ribosomal RNA large subunit methyltransferase M (366 aa).

S-adenosyl-L-methionine is bound by residues S188, 221–224 (CPGG), D240, D260, and D277. K306 serves as the catalytic Proton acceptor.

Belongs to the class I-like SAM-binding methyltransferase superfamily. RNA methyltransferase RlmE family. RlmM subfamily. As to quaternary structure, monomer.

Its subcellular location is the cytoplasm. The enzyme catalyses cytidine(2498) in 23S rRNA + S-adenosyl-L-methionine = 2'-O-methylcytidine(2498) in 23S rRNA + S-adenosyl-L-homocysteine + H(+). Catalyzes the 2'-O-methylation at nucleotide C2498 in 23S rRNA. This is Ribosomal RNA large subunit methyltransferase M from Salmonella paratyphi C (strain RKS4594).